A 190-amino-acid polypeptide reads, in one-letter code: Ribosome hibernation promotion factor (190 aa).

Belongs to the HPF/YfiA ribosome-associated protein family. Long HPF subfamily. In terms of assembly, interacts with 100S ribosomes.

It is found in the cytoplasm. In terms of biological role, required for dimerization of active 70S ribosomes into 100S ribosomes in stationary phase; 100S ribosomes are translationally inactive and sometimes present during exponential growth. This Staphylococcus saprophyticus subsp. saprophyticus (strain ATCC 15305 / DSM 20229 / NCIMB 8711 / NCTC 7292 / S-41) protein is Ribosome hibernation promotion factor.